Here is a 783-residue protein sequence, read N- to C-terminus: E3 UFM1-protein ligase 1 homolog (783 aa).

A disordered region spans residues 404–482 (SNSSANFDAD…AGSSRKSVKP (79 aa)). Positions 445-457 (KSTKKHQRGRAAA) are enriched in basic residues.

It belongs to the UFL1 family.

E3 UFM1-protein ligase that mediates ufmylation of target proteins. The polypeptide is E3 UFM1-protein ligase 1 homolog (Drosophila mojavensis (Fruit fly)).